Reading from the N-terminus, the 154-residue chain is uncharacterized protein (154 aa).

This is an uncharacterized protein from Schizosaccharomyces pombe (strain 972 / ATCC 24843) (Fission yeast).